A 153-amino-acid chain; its full sequence is MSKHSLIENLKKQIEPIAEGLDYELYHIEFVKEGKENYLRIYIDSENGVSLEGCEKVSRAISELLDDIDPIQESYYLEVSSPGIDRVLYTDKHLEKYKSYNIVLNLYSPIDKKKKYEGELVDFNENEIDIKVEENIVTIPREKISKTTLKGEL.

Belongs to the RimP family.

The protein resides in the cytoplasm. Functionally, required for maturation of 30S ribosomal subunits. This chain is Ribosome maturation factor RimP, found in Clostridium botulinum (strain Kyoto / Type A2).